The primary structure comprises 339 residues: MASACGPGAAGHCLLLGLHLFLLTAGPALGWNDPECMLLRDVKALTLHYDRYTTSRRLDPIPQLKCVGGTAGCDSYTPKVIQCQNKGWDGYDVQWECKTDLDIAYKFGKTVVSCEGYESSEDQYVLRGSCGLEYNLDYTELGLQKLKESGKQHGFASFSDYYYKWYSADSCNMSGLITIVVLLGIAFVVYKLFLSDGQYSPPPYSEYPPFSHRYQRFTNSAGPPPPGFKSEFTGPQNTGHGATSGFGSAFTGQQGYENSGPGFWTGLGTGGILGYLFGSNRAATPFSDSWYYPSYPPSYPGTWNRAYSPLRGGSGSYSACSNSDTKTRTASGYGGTRRR.

The signal sequence occupies residues 1–30; it reads MASACGPGAAGHCLLLGLHLFLLTAGPALG. The Lumenal portion of the chain corresponds to 31–173; it reads WNDPECMLLR…KWYSADSCNM (143 aa). A helical membrane pass occupies residues 174–194; it reads SGLITIVVLLGIAFVVYKLFL. Residues 195–339 are Cytoplasmic-facing; it reads SDGQYSPPPY…ASGYGGTRRR (145 aa). The disordered stretch occupies residues 313-339; that stretch reads GSGSYSACSNSDTKTRTASGYGGTRRR. Over residues 316 to 330 the composition is skewed to polar residues; that stretch reads SYSACSNSDTKTRTA.

The protein belongs to the SARAF family. Interacts with STIM1; the interaction is inhibited by the interaction of STIM1 with EFHB.

It localises to the endoplasmic reticulum membrane. Negative regulator of store-operated Ca(2+) entry (SOCE) involved in protecting cells from Ca(2+) overfilling. In response to cytosolic Ca(2+) elevation after endoplasmic reticulum Ca(2+) refilling, promotes a slow inactivation of STIM (STIM1 or STIM2)-dependent SOCE activity: possibly act by facilitating the deoligomerization of STIM to efficiently turn off ORAI when the endoplasmic reticulum lumen is filled with the appropriate Ca(2+) levels, and thus preventing the overload of the cell with excessive Ca(2+) ions. This Pongo abelii (Sumatran orangutan) protein is Store-operated calcium entry-associated regulatory factor (SARAF).